A 542-amino-acid chain; its full sequence is Ribulokinase 2 (542 aa).

The protein belongs to the ribulokinase family.

It catalyses the reaction D-ribulose + ATP = D-ribulose 5-phosphate + ADP + H(+). It carries out the reaction L-ribulose + ATP = L-ribulose 5-phosphate + ADP + H(+). Its pathway is carbohydrate degradation; L-arabinose degradation via L-ribulose; D-xylulose 5-phosphate from L-arabinose (bacterial route): step 2/3. The protein is Ribulokinase 2 of Staphylococcus saprophyticus subsp. saprophyticus (strain ATCC 15305 / DSM 20229 / NCIMB 8711 / NCTC 7292 / S-41).